A 42-amino-acid chain; its full sequence is Large ribosomal subunit protein bL36 (42 aa).

The protein belongs to the bacterial ribosomal protein bL36 family.

This Anaplasma phagocytophilum (strain HZ) protein is Large ribosomal subunit protein bL36.